Consider the following 396-residue polypeptide: Lysophospholipid transporter LplT (396 aa).

At 1–17 the chain is on the periplasmic side; that stretch reads MSESVHTNTSLWSKGMK. Residues 18–38 traverse the membrane as a helical segment; sequence AVIVAQFLSAFGDNALLFATL. At 39 to 52 the chain is on the cytoplasmic side; it reads ALLKAQFYPEWSQP. Residues 53–73 form a helical membrane-spanning segment; that stretch reads ILQMVFVGAYILLAPFVGQVA. At 74–90 the chain is on the periplasmic side; the sequence is DSFAKGRVMMFANGLKL. The chain crosses the membrane as a helical span at residues 91-111; the sequence is LGAASICFGINPFLGYTLVGV. The Cytoplasmic portion of the chain corresponds to 112 to 144; sequence GAAAYSPAKYGILGELTTGSKLVKANGLMEASA. The chain crosses the membrane as a helical span at residues 145-165; the sequence is IAAILLGSVAGGVLADWHVLV. Alanine 166 is a topological domain (periplasmic). Residues 167-187 traverse the membrane as a helical segment; it reads LAACALAYGGAVVANIYIPKL. At 188–225 the chain is on the cytoplasmic side; it reads AARPGQSWNLINMTRSFLNACTSLWCNGETRFSLVGAS. The chain crosses the membrane as a helical span at residues 226–246; sequence LFWGAGVTLRFLLVLWVPVAL. Topologically, residues 247-255 are periplasmic; sequence GITDNATPT. Residues 256-276 traverse the membrane as a helical segment; sequence YLNAMVAIGIVVGAGAAAKLV. The Cytoplasmic portion of the chain corresponds to 277–279; it reads TLE. Residues 280–300 traverse the membrane as a helical segment; the sequence is TVSRCMPAGILIGVVVLIFSL. Residues 301-303 lie on the Periplasmic side of the membrane; it reads QHE. A helical membrane pass occupies residues 304–324; sequence LLPAYALLMLIGVLGGFFVVP. Over 325-342 the chain is Cytoplasmic; that stretch reads LNALLQERGKKSVGAGNA. The chain crosses the membrane as a helical span at residues 343-363; the sequence is IAVQNLGENSAMLLMLGIYSL. Residues 364 to 365 are Periplasmic-facing; sequence AV. The chain crosses the membrane as a helical span at residues 366–386; the sequence is MVGIPVVPIGIGFGALFALAI. The Cytoplasmic segment spans residues 387 to 396; it reads TALWIWQRRH.

This sequence belongs to the major facilitator superfamily. LplT (TC 2.A.1.42) family.

The protein resides in the cell inner membrane. In terms of biological role, catalyzes the facilitated diffusion of 2-acyl-glycero-3-phosphoethanolamine (2-acyl-GPE) into the cell. The sequence is that of Lysophospholipid transporter LplT from Shigella flexneri serotype 5b (strain 8401).